The following is a 352-amino-acid chain: MYTSFHRIDLPRTIVVGGGVLDKAGGYVSGVAQRGSYVLVVSGPTVSSKYFERLRASLEAEGLTVGLKIIRDATVETAEEVAREALESRIEVVAGLGGGKSIDVAKYASKRAGSVFVSIPTVASHDGITSPFSSLKGFDKPISRPAKAPEAIIIDVDVIAEAPRRYNIAGFGDLIGKYTAVLDWRLAHKLRLEYYGEYAASLALLSAKHVSQYAEEIALGTREGYRVLLEALVSSGVSMCIAGSTRPASGSEHLFAHALHIVARNKPLHGEAVGVGTIMMAYLHGKNWRRIRGLLKTVGAPTNAKELGVEDDEVVEALTIAARIRPERYTILGEKGLTREAAEALARKTGVI.

Residues glycine 99–aspartate 103 and threonine 121–serine 124 each bind NAD(+). Aspartate 126 contacts substrate. An NAD(+)-binding site is contributed by serine 130. Aspartate 173 is a binding site for substrate. Residues aspartate 173 and histidine 253 each coordinate Zn(2+). A substrate-binding site is contributed by histidine 257. Histidine 269 contributes to the Zn(2+) binding site.

Belongs to the glycerol-1-phosphate dehydrogenase family. In terms of assembly, homodimer. It depends on Zn(2+) as a cofactor.

The protein localises to the cytoplasm. The catalysed reaction is sn-glycerol 1-phosphate + NAD(+) = dihydroxyacetone phosphate + NADH + H(+). It carries out the reaction sn-glycerol 1-phosphate + NADP(+) = dihydroxyacetone phosphate + NADPH + H(+). Its pathway is membrane lipid metabolism; glycerophospholipid metabolism. With respect to regulation, totally inhibited by EDTA in vitro. Its function is as follows. Catalyzes the NAD(P)H-dependent reduction of dihydroxyacetonephosphate (DHAP or glycerone phosphate) to glycerol 1-phosphate (G1P). The G1P thus generated is used as the glycerophosphate backbone of phospholipids in the cellular membranes of Archaea. Is also able to catalyze the reverse reaction, i.e. the NAD(+)-dependent oxidation of G1P but not of G3P. Is not active toward glycerol, dihydroxyacetone, glyceraldehyde phosphate, and glycerol-2-phosphate. This is Glycerol-1-phosphate dehydrogenase [NAD(P)+] (egsA) from Aeropyrum pernix (strain ATCC 700893 / DSM 11879 / JCM 9820 / NBRC 100138 / K1).